Here is a 150-residue protein sequence, read N- to C-terminus: MIRILGEGKGSKLLENLKEKLEEIVKKEIGDVHVNVILVSEDEIKELNQQFRGQDLPTDVLTFPLMEEDVYGEIYVCPLIVEENAREFNNTFEKELLEVVIHGILHLAGYDHEFEDRNSKEMFEKQKKYVEEVWGEWRSNPSEDSDPGKR.

His102, His106, and His112 together coordinate Zn(2+).

This sequence belongs to the endoribonuclease YbeY family. The cofactor is Zn(2+).

It localises to the cytoplasm. Functionally, single strand-specific metallo-endoribonuclease involved in late-stage 70S ribosome quality control and in maturation of the 3' terminus of the 16S rRNA. This is Endoribonuclease YbeY from Thermotoga sp. (strain RQ2).